Reading from the N-terminus, the 338-residue chain is Putative peptide import ATP-binding protein BOV_A0348 (338 aa).

The region spanning 10-263 is the ABC transporter domain; it reads KGLRTVFRTR…PRHPYTMGLL (254 aa). Residue 43 to 50 participates in ATP binding; it reads GESGSGKS.

This sequence belongs to the ABC transporter superfamily. In terms of assembly, the complex is composed of two ATP-binding proteins (BOV_A0347 and BOV_A0348), two transmembrane proteins (BOV_A0350 and BOV_A0351) and a solute-binding protein (BOV_A0352).

The protein resides in the cell inner membrane. Probably part of an ABC transporter complex that could be involved in peptide import. Probably responsible for energy coupling to the transport system. The sequence is that of Putative peptide import ATP-binding protein BOV_A0348 from Brucella ovis (strain ATCC 25840 / 63/290 / NCTC 10512).